The chain runs to 179 residues: ATP-dependent protease subunit HslV (179 aa).

The active site involves threonine 7. Glycine 162, cysteine 165, and threonine 168 together coordinate Na(+).

This sequence belongs to the peptidase T1B family. HslV subfamily. As to quaternary structure, a double ring-shaped homohexamer of HslV is capped on each side by a ring-shaped HslU homohexamer. The assembly of the HslU/HslV complex is dependent on binding of ATP.

The protein localises to the cytoplasm. The catalysed reaction is ATP-dependent cleavage of peptide bonds with broad specificity.. With respect to regulation, allosterically activated by HslU binding. In terms of biological role, protease subunit of a proteasome-like degradation complex believed to be a general protein degrading machinery. The chain is ATP-dependent protease subunit HslV from Bordetella petrii (strain ATCC BAA-461 / DSM 12804 / CCUG 43448).